We begin with the raw amino-acid sequence, 485 residues long: Rop guanine nucleotide exchange factor 2 (485 aa).

A disordered region spans residues 1–36 (MENLPNHEENDDVGYHQSPGPIDPNDHSASETPVYS). The PRONE domain occupies 107 to 485 (LAVQEISEPE…YVDKTMRGEE (379 aa)).

Interacts with ARC10/ROP11. As to expression, expressed in the vascular tissues of roots, leaves, sepals, petals and siliques.

Guanine-nucleotide exchange factor (GEF) that acts as an activator of Rop (Rho of plants) GTPases by promoting the exchange of GDP for GTP. The protein is Rop guanine nucleotide exchange factor 2 (ROPGEF2) of Arabidopsis thaliana (Mouse-ear cress).